The sequence spans 99 residues: Protein dpy-30 homolog (99 aa).

The residue at position 1 (Met1) is an N-acetylmethionine. A disordered region spans residues Met1 to Ser26. Residue Ser19 is modified to Phosphoserine. Residue Lys35 is modified to N6-acetyllysine; alternate. Lys35 participates in a covalent cross-link: Glycyl lysine isopeptide (Lys-Gly) (interchain with G-Cter in SUMO2); alternate.

Belongs to the dpy-30 family. Homodimer. Core component of several methyltransferase-containing complexes including MLL1/MLL, MLL2/3 (also named ASCOM complex) and MLL4/WBP7. Each complex is at least composed of ASH2L, RBBP5, WDR5, DPY30, one or more specific histone methyltransferases (KMT2A/MLL1, KMT2D/MLL2, KMT2C/MLL3 and KMT2B/MLL4), and the facultative components MEN1, HCFC1, HCFC2, NCOA6, KDM6A, PAXIP1/PTIP, PAGR1 and alpha- and beta-tubulin PAXIP1/PTIP, PAGR1 and alpha- and beta-tubulin. Interacts with ASH2L. The interaction with ASH2L is direct. Interacts with ARFGEF1. Component of the SET1 complex, at least composed of the catalytic subunit (SETD1A or SETD1B), WDR5, WDR82, RBBP5, ASH2L/ASH2, CXXC1/CFP1, HCFC1 and DPY30.

The protein resides in the nucleus. The protein localises to the golgi apparatus. Its subcellular location is the trans-Golgi network. As part of the MLL1/MLL complex, involved in the methylation of histone H3 at 'Lys-4', particularly trimethylation. Histone H3 'Lys-4' methylation represents a specific tag for epigenetic transcriptional activation. May play some role in histone H3 acetylation. In embryonic stem (ES) cells, plays a crucial role in the differentiation potential, particularly along the neural lineage, regulating gene induction and histone H3 'Lys-4' methylation at key developmental loci, including that mediated by retinoic acid. Does not affect ES cell self-renewal. May also play an indirect or direct role in endosomal transport. The chain is Protein dpy-30 homolog (Dpy30) from Mus musculus (Mouse).